The sequence spans 224 residues: Phosphoribosylformylglycinamidine synthase subunit PurQ (224 aa).

The Glutamine amidotransferase type-1 domain occupies 2–224 (KFAVIQFPGS…SILNHAEVKA (223 aa)). Cys86 functions as the Nucleophile in the catalytic mechanism. Residues His195 and Glu197 contribute to the active site.

Part of the FGAM synthase complex composed of 1 PurL, 1 PurQ and 2 PurS subunits.

The protein localises to the cytoplasm. The catalysed reaction is N(2)-formyl-N(1)-(5-phospho-beta-D-ribosyl)glycinamide + L-glutamine + ATP + H2O = 2-formamido-N(1)-(5-O-phospho-beta-D-ribosyl)acetamidine + L-glutamate + ADP + phosphate + H(+). It carries out the reaction L-glutamine + H2O = L-glutamate + NH4(+). The protein operates within purine metabolism; IMP biosynthesis via de novo pathway; 5-amino-1-(5-phospho-D-ribosyl)imidazole from N(2)-formyl-N(1)-(5-phospho-D-ribosyl)glycinamide: step 1/2. Functionally, part of the phosphoribosylformylglycinamidine synthase complex involved in the purines biosynthetic pathway. Catalyzes the ATP-dependent conversion of formylglycinamide ribonucleotide (FGAR) and glutamine to yield formylglycinamidine ribonucleotide (FGAM) and glutamate. The FGAM synthase complex is composed of three subunits. PurQ produces an ammonia molecule by converting glutamine to glutamate. PurL transfers the ammonia molecule to FGAR to form FGAM in an ATP-dependent manner. PurS interacts with PurQ and PurL and is thought to assist in the transfer of the ammonia molecule from PurQ to PurL. The chain is Phosphoribosylformylglycinamidine synthase subunit PurQ from Lactobacillus delbrueckii subsp. bulgaricus (strain ATCC 11842 / DSM 20081 / BCRC 10696 / JCM 1002 / NBRC 13953 / NCIMB 11778 / NCTC 12712 / WDCM 00102 / Lb 14).